The following is a 183-amino-acid chain: Pectinesterase inhibitor 8 (183 aa).

Residues 1 to 30 (MAQRASRRPAAAAAAVVVAVVLAVSGGVGA) form the signal peptide. Intrachain disulfides connect C36-C51 and C107-C147.

The protein belongs to the PMEI family.

It localises to the secreted. Its subcellular location is the extracellular space. The protein resides in the apoplast. Functionally, pectin methylesterase (PME) inhibitor that inhibits PME in vitro. The protein is Pectinesterase inhibitor 8 of Oryza sativa subsp. japonica (Rice).